Consider the following 210-residue polypeptide: Endonuclease III (210 aa).

One can recognise a HhH domain in the interval 108 to 127 (FKALIKLPGVGRKTANVVLN). 4 residues coordinate [4Fe-4S] cluster: cysteine 187, cysteine 194, cysteine 197, and cysteine 203.

The protein belongs to the Nth/MutY family. The cofactor is [4Fe-4S] cluster.

The catalysed reaction is 2'-deoxyribonucleotide-(2'-deoxyribose 5'-phosphate)-2'-deoxyribonucleotide-DNA = a 3'-end 2'-deoxyribonucleotide-(2,3-dehydro-2,3-deoxyribose 5'-phosphate)-DNA + a 5'-end 5'-phospho-2'-deoxyribonucleoside-DNA + H(+). DNA repair enzyme that has both DNA N-glycosylase activity and AP-lyase activity. The DNA N-glycosylase activity releases various damaged pyrimidines from DNA by cleaving the N-glycosidic bond, leaving an AP (apurinic/apyrimidinic) site. The AP-lyase activity cleaves the phosphodiester bond 3' to the AP site by a beta-elimination, leaving a 3'-terminal unsaturated sugar and a product with a terminal 5'-phosphate. This is Endonuclease III from Rickettsia conorii (strain ATCC VR-613 / Malish 7).